Consider the following 495-residue polypeptide: Cytochrome P450 2B15 (495 aa).

Position 129 is a phosphoserine; by PKA (serine 129). Cysteine 437 contributes to the heme binding site.

It belongs to the cytochrome P450 family. Requires heme as cofactor.

The protein localises to the endoplasmic reticulum membrane. It localises to the microsome membrane. The catalysed reaction is an organic molecule + reduced [NADPH--hemoprotein reductase] + O2 = an alcohol + oxidized [NADPH--hemoprotein reductase] + H2O + H(+). Its function is as follows. Cytochromes P450 are a group of heme-thiolate monooxygenases. In liver microsomes, this enzyme is involved in an NADPH-dependent electron transport pathway. It oxidizes a variety of structurally unrelated compounds, including steroids, fatty acids, and xenobiotics. This is Cytochrome P450 2B15 (Cyp2b15) from Rattus norvegicus (Rat).